Consider the following 33-residue polypeptide: Brevinin-2Ef (33 aa).

Cys-27 and Cys-33 are disulfide-bonded.

As to expression, expressed by the skin glands.

The protein localises to the secreted. Functionally, shows antibacterial activity against representative Gram-negative and Gram-positive bacterial species, and hemolytic activity. The polypeptide is Brevinin-2Ef (Pelophylax ridibundus (Marsh frog)).